Consider the following 378-residue polypeptide: Aminomethyltransferase (378 aa).

Belongs to the GcvT family. As to quaternary structure, the glycine cleavage system is composed of four proteins: P, T, L and H.

It catalyses the reaction N(6)-[(R)-S(8)-aminomethyldihydrolipoyl]-L-lysyl-[protein] + (6S)-5,6,7,8-tetrahydrofolate = N(6)-[(R)-dihydrolipoyl]-L-lysyl-[protein] + (6R)-5,10-methylene-5,6,7,8-tetrahydrofolate + NH4(+). Its function is as follows. The glycine cleavage system catalyzes the degradation of glycine. The chain is Aminomethyltransferase from Acidobacterium capsulatum (strain ATCC 51196 / DSM 11244 / BCRC 80197 / JCM 7670 / NBRC 15755 / NCIMB 13165 / 161).